The following is a 476-amino-acid chain: Mitochondrial-processing peptidase subunit beta (476 aa).

Residues 1–28 (MASRRLALNLAQGVKARAGGVINPFRRG) constitute a mitochondrion transit peptide. His84 provides a ligand contact to Zn(2+). Residue Glu87 is the Proton acceptor of the active site. Residues His88 and Glu164 each coordinate Zn(2+).

The protein belongs to the peptidase M16 family. Heterodimer of mpp (alpha) and pep (beta) subunits, forming the mitochondrial processing protease (MPP) in which mpp is involved in substrate recognition and binding and pep is the catalytic subunit. Component of the ubiquinol-cytochrome c oxidoreductase (cytochrome b-c1 complex, complex III, CIII), a multisubunit enzyme composed of 10 subunits. The complex is composed of 3 respiratory subunits cytochrome b (cob), cytochrome c1 (cyt-1) and Rieske protein (fes-1), 2 core protein subunits pep and ucr-1, and 5 low-molecular weight protein subunits qcr6, qcr7, qcr8, qcr9 and probably NCU16844/qcr10. The complex exists as an obligatory dimer and forms supercomplexes (SCs) in the inner mitochondrial membrane with NADH-ubiquinone oxidoreductase (complex I, CI) and cytochrome c oxidase (complex IV, CIV), resulting in different assemblies (supercomplexes SCI(1)III(2), SCIII(2)IV(1) and SCIII(2)IV(2) as well as higher order I(x)III(y)IV(z) megacomplexes). It depends on Zn(2+) as a cofactor.

It is found in the mitochondrion matrix. The protein resides in the mitochondrion inner membrane. The catalysed reaction is Release of N-terminal transit peptides from precursor proteins imported into the mitochondrion, typically with Arg in position P2.. Binding to mpp is required for catalytic activity. Inhibited by metal chelator ethylenediaminetetraacetic acid (EDTA). Functionally, catalytic subunit of the essential mitochondrial processing protease (MPP), which cleaves the mitochondrial sequence off newly imported precursors proteins. Preferentially, cleaves after an arginine at position P2. Its function is as follows. Component of the ubiquinol-cytochrome c oxidoreductase, a multisubunit transmembrane complex that is part of the mitochondrial electron transport chain which drives oxidative phosphorylation. The respiratory chain contains 3 multisubunit complexes succinate dehydrogenase (complex II, CII), ubiquinol-cytochrome c oxidoreductase (cytochrome b-c1 complex, complex III, CIII) and cytochrome c oxidase (complex IV, CIV), that cooperate to transfer electrons derived from NADH and succinate to molecular oxygen, creating an electrochemical gradient over the inner membrane that drives transmembrane transport and the ATP synthase. The cytochrome b-c1 complex catalyzes electron transfer from ubiquinol to cytochrome c, linking this redox reaction to translocation of protons across the mitochondrial inner membrane, with protons being carried across the membrane as hydrogens on the quinol. In the process called Q cycle, 2 protons are consumed from the matrix, 4 protons are released into the intermembrane space and 2 electrons are passed to cytochrome c. The protein is Mitochondrial-processing peptidase subunit beta of Neurospora crassa (strain ATCC 24698 / 74-OR23-1A / CBS 708.71 / DSM 1257 / FGSC 987).